We begin with the raw amino-acid sequence, 424 residues long: MGPAGSALSSGQMQMQMVLWGSLAAVAMFFLITFLILLCSSCDRDKKPRQHSGDHESLMNVPSDKEMFSHSATSLTTDALASSEQNGVLTNGDILSEDSTMTCMQHYEEVQTSASDLLDSQDSTGKAKCHQSRELPRIPPENAVDAMLTARAADGDSGPGVEGPYEVLKDSSSQENMVEDCLYETVKEIKEVADKSQGGKSKSTSALKELQGAHAEGKADFAEYASVDRNKKCRHSTNAESILGTSSDLDEETPPPVPVKLLDENANLPEKGEHGAEEQAPEAPSGHSKRFSSLSYKSREEDPTLTEEEISAMYSSVNKPGQSAHKPGPESTCQCPQGPPQRSSSSCNDLYATVKDFEKTPNSISMLPPARRPGEEPEPDYEAIQTLNREDDKVPLGTNGHLVPKENDYESIGDLQQGRDVTRL.

Residues 1–17 are Extracellular-facing; the sequence is MGPAGSALSSGQMQMQM. Residues 18–38 form a helical; Signal-anchor for type III membrane protein membrane-spanning segment; that stretch reads VLWGSLAAVAMFFLITFLILL. Residues Cys-39 and Cys-42 are each lipidated (S-palmitoyl cysteine). Residues 39–424 lie on the Cytoplasmic side of the membrane; the sequence is CSSCDRDKKP…LQQGRDVTRL (386 aa). 2 positions are modified to phosphoserine: Ser-52 and Ser-63. Tyr-107 is modified (phosphotyrosine; by LYN). Ser-157 carries the phosphoserine modification. Residues Tyr-165, Tyr-183, and Tyr-224 each carry the phosphotyrosine modification. Positions 194-347 are disordered; that stretch reads DKSQGGKSKS…GPPQRSSSSC (154 aa). The segment covering 215–230 has biased composition (basic and acidic residues); sequence AEGKADFAEYASVDRN. Ser-226 is modified (phosphoserine). Over residues 236–247 the composition is skewed to polar residues; that stretch reads STNAESILGTSS. Tyr-314 is modified (phosphotyrosine; by FYN and LYN). An interaction with CSK region spans residues 314–317; that stretch reads YSSV. The segment covering 331–347 has biased composition (polar residues); the sequence is STCQCPQGPPQRSSSSC. Ser-346 carries the post-translational modification Phosphoserine. Tyr-351, Tyr-381, and Tyr-409 each carry phosphotyrosine. The disordered stretch occupies residues 361–424; sequence PNSISMLPPA…LQQGRDVTRL (64 aa). The interaction with NHERF1 stretch occupies residues 422–424; that stretch reads TRL.

Interacts with NHERF1/EBP50. In resting T-cells, part of a PAG1-NHERF1-MSN complex which is disrupted upon TCR activation. When phosphorylated, interacts with CSK. Identified in a complex with LYN and STAT3. Interacts with LYN. In terms of processing, palmitoylated. Phosphorylated by FYN on Tyr-314 in resting T-cells; which promotes interaction with CSK. Dephosphorylated by PTPRC/CD45 upon TCR activation; which leads to CSK dissociation. May also be dephosphorylated by PTPN11. Hyperphosphorylated in mast cells upon FCER1 activation. Phosphorylated by LYN in response to EPO. As to expression, ubiquitously expressed, with highest levels in developing brain, lung, thymus, spleen and testis. Present in mast cells.

Its subcellular location is the cell membrane. In terms of biological role, negatively regulates TCR (T-cell antigen receptor)-mediated signaling in T-cells and FCER1 (high affinity immunoglobulin epsilon receptor)-mediated signaling in mast cells. Promotes CSK activation and recruitment to lipid rafts, which results in LCK inhibition. Inhibits immunological synapse formation by preventing dynamic arrangement of lipid raft proteins. May be involved in cell adhesion signaling. The polypeptide is Phosphoprotein associated with glycosphingolipid-enriched microdomains 1 (Pag1) (Rattus norvegicus (Rat)).